A 366-amino-acid chain; its full sequence is Ferredoxin--NADP reductase, leaf isozyme 2, chloroplastic (366 aa).

The N-terminal 48 residues, 1-48 (MAAVNTVSSLPCSKAGAAVAGGAPRPSTCSVFYPPRCWSKRSSGNGVR), are a transit peptide targeting the chloroplast. The region spanning 87 to 209 (KEPYTGRCLL…TGPVGKEMLM (123 aa)) is the FAD-binding FR-type domain. Residues 145–148 (RLYS), 166–168 (CVK), Y172, and 183–185 (VCS) contribute to the FAD site. Residues S148 and K168 each contribute to the NADP(+) site. Residues C184 and C189 are joined by a disulfide bond. S185 carries the post-translational modification Phosphoserine. At T216 the chain carries Phosphothreonine. T224 provides a ligand contact to FAD. Residues T224, 256-257 (VP), 286-287 (SR), K296, 325-326 (GL), and E364 contribute to the NADP(+) site.

The protein belongs to the ferredoxin--NADP reductase type 1 family. In terms of assembly, heterodimer with LFNR1. Component of high molecular weight thylakoid LFNRs-containing protein complexes containing LIR1, LFNR1, LFNR2, TIC62 and TROL proteins. Interacts directly with LIR1 and TIC62; LIR1 increases the affinity of LFNR1 and LFNR2 for TIC62. FAD is required as a cofactor. Post-translationally, may form interchain disulfide bonds with LIR1.

Its subcellular location is the plastid. It localises to the chloroplast stroma. The protein resides in the chloroplast thylakoid membrane. The catalysed reaction is 2 reduced [2Fe-2S]-[ferredoxin] + NADP(+) + H(+) = 2 oxidized [2Fe-2S]-[ferredoxin] + NADPH. It participates in energy metabolism; photosynthesis. Plays a key role in regulating the relative amounts of cyclic and non-cyclic electron flow to meet the demands of the plant for ATP and reducing power. This chain is Ferredoxin--NADP reductase, leaf isozyme 2, chloroplastic, found in Oryza sativa subsp. japonica (Rice).